Here is a 128-residue protein sequence, read N- to C-terminus: 3-aminoacrylate deaminase RutC (128 aa).

Belongs to the RutC family.

It carries out the reaction (Z)-3-aminoacrylate + H2O + H(+) = 3-oxopropanoate + NH4(+). Involved in pyrimidine catabolism. Catalyzes the deamination of 3-aminoacrylate to malonic semialdehyde, a reaction that can also occur spontaneously. RutC may facilitate the reaction and modulate the metabolic fitness, rather than catalyzing essential functions. The sequence is that of 3-aminoacrylate deaminase RutC from Pantoea ananatis (strain LMG 20103).